We begin with the raw amino-acid sequence, 95 residues long: Aspartyl/glutamyl-tRNA(Asn/Gln) amidotransferase subunit C (95 aa).

Belongs to the GatC family. Heterotrimer of A, B and C subunits.

The enzyme catalyses L-glutamyl-tRNA(Gln) + L-glutamine + ATP + H2O = L-glutaminyl-tRNA(Gln) + L-glutamate + ADP + phosphate + H(+). It carries out the reaction L-aspartyl-tRNA(Asn) + L-glutamine + ATP + H2O = L-asparaginyl-tRNA(Asn) + L-glutamate + ADP + phosphate + 2 H(+). Functionally, allows the formation of correctly charged Asn-tRNA(Asn) or Gln-tRNA(Gln) through the transamidation of misacylated Asp-tRNA(Asn) or Glu-tRNA(Gln) in organisms which lack either or both of asparaginyl-tRNA or glutaminyl-tRNA synthetases. The reaction takes place in the presence of glutamine and ATP through an activated phospho-Asp-tRNA(Asn) or phospho-Glu-tRNA(Gln). The chain is Aspartyl/glutamyl-tRNA(Asn/Gln) amidotransferase subunit C from Rhizobium leguminosarum bv. trifolii (strain WSM2304).